The sequence spans 245 residues: Cell division protein ZapD (245 aa).

It belongs to the ZapD family. In terms of assembly, interacts with FtsZ.

Its subcellular location is the cytoplasm. In terms of biological role, cell division factor that enhances FtsZ-ring assembly. Directly interacts with FtsZ and promotes bundling of FtsZ protofilaments, with a reduction in FtsZ GTPase activity. This is Cell division protein ZapD from Photobacterium profundum (strain SS9).